The chain runs to 405 residues: Nuclear RNA export factor 2 (405 aa).

Positions 1-33 are disordered; it reads MRGQNRRGYRNIEGRLSLSSHSSHSSPRQTHVT. The segment covering 16-26 has biased composition (low complexity); that stretch reads LSLSSHSSHSS. The 69-residue stretch at 26–94 folds into the RRM domain; it reads SPRQTHVTNL…SVVLQHIGYK (69 aa). LRR repeat units follow at residues 97 to 118 and 123 to 144; these read RISGISFSNNRLCHLDHLSSLS and FLKFLDLSHNQISSGEELKKLG. An NTF2 domain is found at 215-382; sequence LVEEFIITYY…VAIVSDQLFI (168 aa).

It belongs to the NXF family.

The protein resides in the nucleus. Its function is as follows. Involved in the export of cellular mRNA to the cytoplasm. Plays a role in the nuclear retention of unspliced mRNAs. This Caenorhabditis elegans protein is Nuclear RNA export factor 2.